A 66-amino-acid polypeptide reads, in one-letter code: uncharacterized protein (66 aa).

Positions M1–N25 are cleaved as a signal peptide. Residues Q21–A31 show a composition bias toward polar residues. The interval Q21–D66 is disordered.

This is an uncharacterized protein from Bacillus subtilis (strain 168).